Consider the following 387-residue polypeptide: Succinyl-diaminopimelate desuccinylase (387 aa).

His-74 is a Zn(2+) binding site. Asp-76 is an active-site residue. Asp-107 lines the Zn(2+) pocket. The active-site Proton acceptor is the Glu-142. Glu-143, Glu-171, and His-360 together coordinate Zn(2+).

This sequence belongs to the peptidase M20A family. DapE subfamily. Homodimer. Requires Zn(2+) as cofactor. Co(2+) is required as a cofactor.

The catalysed reaction is N-succinyl-(2S,6S)-2,6-diaminopimelate + H2O = (2S,6S)-2,6-diaminopimelate + succinate. It participates in amino-acid biosynthesis; L-lysine biosynthesis via DAP pathway; LL-2,6-diaminopimelate from (S)-tetrahydrodipicolinate (succinylase route): step 3/3. In terms of biological role, catalyzes the hydrolysis of N-succinyl-L,L-diaminopimelic acid (SDAP), forming succinate and LL-2,6-diaminopimelate (DAP), an intermediate involved in the bacterial biosynthesis of lysine and meso-diaminopimelic acid, an essential component of bacterial cell walls. The sequence is that of Succinyl-diaminopimelate desuccinylase from Rhodopseudomonas palustris (strain TIE-1).